Consider the following 395-residue polypeptide: Altered inheritance of mitochondria protein 39, mitochondrial (395 aa).

The helical transmembrane segment at 161-181 threads the bilayer; sequence IFGGIFGVIIGYSLIYKVIYL.

Belongs to the AIM39 family.

Its subcellular location is the mitochondrion membrane. The protein is Altered inheritance of mitochondria protein 39, mitochondrial (AIM39) of Saccharomyces cerevisiae (strain YJM789) (Baker's yeast).